Consider the following 454-residue polypeptide: Tol-Pal system protein TolB (454 aa).

Residues methionine 1–alanine 21 form the signal peptide.

Belongs to the TolB family. As to quaternary structure, the Tol-Pal system is composed of five core proteins: the inner membrane proteins TolA, TolQ and TolR, the periplasmic protein TolB and the outer membrane protein Pal. They form a network linking the inner and outer membranes and the peptidoglycan layer.

The protein localises to the periplasm. In terms of biological role, part of the Tol-Pal system, which plays a role in outer membrane invagination during cell division and is important for maintaining outer membrane integrity. This is Tol-Pal system protein TolB from Sphingopyxis alaskensis (strain DSM 13593 / LMG 18877 / RB2256) (Sphingomonas alaskensis).